Here is a 133-residue protein sequence, read N- to C-terminus: Small ribosomal subunit protein uS8 (133 aa).

This sequence belongs to the universal ribosomal protein uS8 family. As to quaternary structure, part of the 30S ribosomal subunit. Contacts proteins S5 and S12.

In terms of biological role, one of the primary rRNA binding proteins, it binds directly to 16S rRNA central domain where it helps coordinate assembly of the platform of the 30S subunit. This chain is Small ribosomal subunit protein uS8, found in Gloeobacter violaceus (strain ATCC 29082 / PCC 7421).